We begin with the raw amino-acid sequence, 165 residues long: (2E)-enoyl-[ACP] glycyltransferase (165 aa).

It belongs to the FcoT family.

It catalyses the reaction a (3R)-3-[(carboxymethyl)amino]fatty acid + holo-[ACP] + H(+) = a (2E)-enoyl-[ACP] + glycine + H2O. It carries out the reaction (3R)-3-[(carboxymethyl)amino]butanoate + holo-[ACP] + H(+) = (2E)-butenoyl-[ACP] + glycine + H2O. Its function is as follows. Involved in the biosynthesis of a unique class of isonitrile lipopeptides (INLPs). Catalyzes a Michael addition of glycine to the beta-position of an alpha,beta-unsaturated fatty acyl-[ACP], producing a (3R)-3-[(carboxymethyl)amino]fatty acid. Acts on the (2E)-butenoyl moiety loaded on the acyl-carrier protein ScoB, forming the product (3R)-3-[(carboxymethyl)amino]butanoate released from ScoB. The chain is (2E)-enoyl-[ACP] glycyltransferase from Streptomyces coeruleorubidus.